The chain runs to 488 residues: Beta-1,3-glucan-binding protein (488 aa).

The N-terminal stretch at 1 to 17 (MFVTFICFLACLTCSYG) is a signal peptide. The segment at 18 to 135 (QPRAQQYVVP…GTPADTSLEP (118 aa)) is binds to curdlan, laminarihexaose and laminarin. The complex formation with laminarin induces self-association of the complexes into a macro structure, likely containing six protein and three laminarin molecules. The macro structures may form a platform on a microbial surface for recruitment of downstream proteases, as a means of amplification of the initial signal of pathogen recognition for the activation of the phenoloxidase cascade. The tract at residues 18–198 (QPRAQQYVVP…LKDLANWEAE (181 aa)) is binds to curdlan, lipopolysaccharide and lipoteichoic acid, activates the phenoloxidase cascade and is resistant to proteolytic degradation by trypsin or chymotrypsin, but is not as effective as the full-length protein in aggregation of microorganisms. In terms of domain architecture, CBM39 spans 24-123 (YVVPSAKLEA…GEWTVTEFVN (100 aa)). The interval 24-127 (YVVPSAKLEA…VTEFVNEDGT (104 aa)) is binds to laminarihexaose and laminarin. Residues D72, 99–101 (WTY), and R110 each bind substrate. A disordered region spans residues 125-158 (DGTPADTSLEPTTAPTPVRPDQPNQPIPTHRPDP). Residues 129-139 (ADTSLEPTTAP) are compositionally biased toward polar residues. The segment covering 141–150 (PVRPDQPNQP) has biased composition (pro residues). One can recognise a GH16 domain in the interval 144 to 488 (PDQPNQPIPT…KVDYVRVYAL (345 aa)). The segment at 199-488 (VKFPEEPDYP…KVDYVRVYAL (290 aa)) is binds to laminarin, but not to curdlan, does not activate the phenoloxidase cascade, is susceptible to proteinase digestion by trypsin or chymotrypsin and does not cause aggregation of microorganisms. Residues N373 and N453 are each glycosylated (N-linked (GlcNAc...) asparagine).

Belongs to the insect beta-1,3-glucan binding protein family. In terms of assembly, monomer. In terms of processing, the N-terminus is blocked. As to expression, fat body and hemolymph.

The protein localises to the secreted. Functionally, involved in the recognition of invading microorganisms causing their aggregation. Activates the phenoloxidase cascade. Binds specifically to beta-1,3-glucan. Binds to curdlan, a linear water-insoluble beta-1,3-glucan polysaccharide, and to laminarin, a water-soluble beta-1,3-glucan polysaccharide containing beta-1,6 branches. Also binds to lipopolysaccharide and lipoteichoic acid. This Plodia interpunctella (Indianmeal moth) protein is Beta-1,3-glucan-binding protein.